The chain runs to 493 residues: tRNA(Ile)-lysidine synthase (493 aa).

26–31 is an ATP binding site; sequence SGGSDS.

This sequence belongs to the tRNA(Ile)-lysidine synthase family.

The protein localises to the cytoplasm. The catalysed reaction is cytidine(34) in tRNA(Ile2) + L-lysine + ATP = lysidine(34) in tRNA(Ile2) + AMP + diphosphate + H(+). Functionally, ligates lysine onto the cytidine present at position 34 of the AUA codon-specific tRNA(Ile) that contains the anticodon CAU, in an ATP-dependent manner. Cytidine is converted to lysidine, thus changing the amino acid specificity of the tRNA from methionine to isoleucine. This is tRNA(Ile)-lysidine synthase from Bartonella henselae (strain ATCC 49882 / DSM 28221 / CCUG 30454 / Houston 1) (Rochalimaea henselae).